Consider the following 540-residue polypeptide: Probable ATP-dependent RNA helicase DDX28 (540 aa).

Positions 3–18 (LAGPSRLLALAVRLLL) match the Mitochondrial targeting signal motif. Positions 126 to 156 (GSFVDLGLEPRVLLALQEAVPEVVQPTSVQS) match the Q motif motif. Positions 159–351 (IPPLLRGRHL…SKVTSPDSLT (193 aa)) constitute a Helicase ATP-binding domain. 172 to 179 (AETGSGKT) serves as a coordination point for ATP. The short motif at 180-191 (LSYLLPLFQRLL) is the Nuclear export signal element. Positions 286–289 (DEVD) match the DEAD motif. Residues 377 to 536 (KVTELVQILK…GLASSVGDPL (160 aa)) form the Helicase C-terminal domain. The Nuclear localization signal motif lies at 520 to 523 (RRRR).

It belongs to the DEAD box helicase family. In terms of assembly, monomer. Found in a complex with GRSF1, DHX30, FASTKD2 and FASTKD5. Associates with the 16S mitochondrial rRNA (16S mt-rRNA) and with the mitochondrial ribosome large subunit (39S).

The protein resides in the nucleus. The protein localises to the mitochondrion. Its subcellular location is the mitochondrion matrix. It localises to the mitochondrion nucleoid. It carries out the reaction ATP + H2O = ADP + phosphate + H(+). In terms of biological role, plays an essential role in facilitating the proper assembly of the mitochondrial large ribosomal subunit and its helicase activity is essential for this function. May be involved in RNA processing or transport. Has RNA and Mg(2+)-dependent ATPase activity. The polypeptide is Probable ATP-dependent RNA helicase DDX28 (Ddx28) (Mus musculus (Mouse)).